Consider the following 387-residue polypeptide: Mitogen-activated protein kinase homolog MMK1 (387 aa).

In terms of domain architecture, Protein kinase spans 55–340 (KPPIMPIGKG…VEDALAHPYL (286 aa)). ATP-binding positions include 61 to 69 (IGKGAYGIV) and lysine 84. Residue aspartate 181 is the Proton acceptor of the active site. Threonine 213 is subject to Phosphothreonine. The short motif at 213–215 (TEY) is the TXY element. Residue tyrosine 215 is modified to Phosphotyrosine.

It belongs to the protein kinase superfamily. CMGC Ser/Thr protein kinase family. MAP kinase subfamily. Mg(2+) serves as cofactor. Post-translationally, dually phosphorylated on Thr-213 and Tyr-215, which activates the enzyme. Autophosphorylated. In terms of tissue distribution, roots and stems.

The catalysed reaction is L-seryl-[protein] + ATP = O-phospho-L-seryl-[protein] + ADP + H(+). It carries out the reaction L-threonyl-[protein] + ATP = O-phospho-L-threonyl-[protein] + ADP + H(+). With respect to regulation, activated by tyrosine and threonine phosphorylation. In terms of biological role, may play a role in the mitogenic induction of symbiotic root nodules on Alfalfa by Rhizobium signal molecules. This Medicago sativa (Alfalfa) protein is Mitogen-activated protein kinase homolog MMK1 (MMK1).